A 240-amino-acid polypeptide reads, in one-letter code: LOB domain-containing protein 39 (240 aa).

Residues 1 to 107 enclose the LOB domain; the sequence is MSCNGCRVLR…VETVLRGGTL (107 aa). The disordered stretch occupies residues 200–233; the sequence is GDRPGSPSEESVTTSCWENGMRGDNKQKRNKGEK. Over residues 207-216 the composition is skewed to polar residues; the sequence is SEESVTTSCW.

Belongs to the LOB domain-containing protein family. In terms of tissue distribution, expressed in young shoots, roots, stems, leaves and flowers.

The chain is LOB domain-containing protein 39 (LBD39) from Arabidopsis thaliana (Mouse-ear cress).